The sequence spans 182 residues: Oligoribonuclease (182 aa).

The Exonuclease domain occupies 7 to 170; sequence LIWIDLEMTG…EDIRESVEEL (164 aa). Residue tyrosine 128 is part of the active site.

Belongs to the oligoribonuclease family.

Its subcellular location is the cytoplasm. Its function is as follows. 3'-to-5' exoribonuclease specific for small oligoribonucleotides. The polypeptide is Oligoribonuclease (Hahella chejuensis (strain KCTC 2396)).